Consider the following 250-residue polypeptide: Bacteriorhodopsin-II (250 aa).

A run of 7 helical transmembrane segments spans residues 14-34 (EGIW…YFMA), 49-69 (VITI…FFGF), 89-109 (YADW…LAGA), 114-134 (MASL…ATLM), 142-162 (AFWT…VVVV), 183-203 (IILV…EGLG), and 210-230 (ETLL…FILL). At K222 the chain carries N6-(retinylidene)lysine.

This sequence belongs to the archaeal/bacterial/fungal opsin family. Post-translationally, the covalent binding of retinal to the apoprotein, bacterioopsin, generates bacteriorhodopsin.

The protein localises to the membrane. Functionally, light-driven proton pump. The chain is Bacteriorhodopsin-II (xop1) from Haloarcula marismortui (strain ATCC 43049 / DSM 3752 / JCM 8966 / VKM B-1809) (Halobacterium marismortui).